The chain runs to 290 residues: RWD domain-containing protein 2B (290 aa).

The 125-residue stretch at 12-136 folds into the RWD domain; it reads SELDLLASMF…EWVKEHAFDY (125 aa).

The polypeptide is RWD domain-containing protein 2B (Rwdd2b) (Mus musculus (Mouse)).